The following is a 279-amino-acid chain: MAIRNYKPTTPGRRGSSVADFAEITRSNPEKSLLRPLSKSGGRNNQGRITTRHIGGGHKRQYRVIDFRRNDKDGVNAKVAHIEYDPNRTARIALLHFLDGTKRYILAPAGLKQGNIVESGAGADIKPGNNLPLCNIPTGTVVHAIELKPGGGAKLARSAGSSVRLVAKDGPYAQLRLPSGEVRNVDARCRATIGEVGNAEQSNINWGKAGRMRWKGVRPTVRGVAMNPIDHPHGGGEGKTSGGRHPVSPWGQKEGRTRHPNKESDKLIVRRRNAGKKRK.

Disordered stretches follow at residues 29–53 (PEKSLLRPLSKSGGRNNQGRITTRH) and 224–279 (VAMN…KKRK). Residues 253–268 (KEGRTRHPNKESDKLI) show a composition bias toward basic and acidic residues. Residues 269-279 (VRRRNAGKKRK) are compositionally biased toward basic residues.

Belongs to the universal ribosomal protein uL2 family. In terms of assembly, part of the 50S ribosomal subunit. Forms a bridge to the 30S subunit in the 70S ribosome.

Its function is as follows. One of the primary rRNA binding proteins. Required for association of the 30S and 50S subunits to form the 70S ribosome, for tRNA binding and peptide bond formation. It has been suggested to have peptidyltransferase activity; this is somewhat controversial. Makes several contacts with the 16S rRNA in the 70S ribosome. The sequence is that of Large ribosomal subunit protein uL2 from Leifsonia xyli subsp. xyli (strain CTCB07).